The following is a 335-amino-acid chain: GTPase Obg (335 aa).

In terms of domain architecture, Obg spans 1 to 158 (MFLDQITIEL…RQVELELKLI (158 aa)). The OBG-type G domain maps to 159–334 (ADIGLVGFPN…LNSLFTNKLA (176 aa)). GTP contacts are provided by residues 165-172 (GFPNAGKS), 190-194 (FTTLQ), 215-218 (DIPG), 285-288 (NKID), and 315-317 (SGL). Serine 172 and threonine 192 together coordinate Mg(2+).

The protein belongs to the TRAFAC class OBG-HflX-like GTPase superfamily. OBG GTPase family. In terms of assembly, monomer. The cofactor is Mg(2+).

Its subcellular location is the cytoplasm. Functionally, an essential GTPase (4.1 pmol GTP/min). Cannot substitute endogenous obg in E.coli, has a partially dominant-negative phenotype upon overexpression in liquid culture leading to decreased growth rate in a concentration-dependent fashion, with 50% of cells being elongated. Binds GTP, GDP and possibly (p)ppGpp with moderate affinity, with high nucleotide exchange rates and a fairly low GTP hydrolysis rate. It may play a role in control of the cell cycle, stress response, ribosome biogenesis and in those bacteria that undergo differentiation, in morphogenesis control. The protein is GTPase Obg of Chlamydia abortus (strain DSM 27085 / S26/3) (Chlamydophila abortus).